The following is a 277-amino-acid chain: Putative pyruvate, phosphate dikinase regulatory protein (277 aa).

Position 151-158 (151-158 (GISRTSKT)) interacts with ADP.

It belongs to the pyruvate, phosphate/water dikinase regulatory protein family. PDRP subfamily.

The enzyme catalyses N(tele)-phospho-L-histidyl/L-threonyl-[pyruvate, phosphate dikinase] + ADP = N(tele)-phospho-L-histidyl/O-phospho-L-threonyl-[pyruvate, phosphate dikinase] + AMP + H(+). It carries out the reaction N(tele)-phospho-L-histidyl/O-phospho-L-threonyl-[pyruvate, phosphate dikinase] + phosphate + H(+) = N(tele)-phospho-L-histidyl/L-threonyl-[pyruvate, phosphate dikinase] + diphosphate. In terms of biological role, bifunctional serine/threonine kinase and phosphorylase involved in the regulation of the pyruvate, phosphate dikinase (PPDK) by catalyzing its phosphorylation/dephosphorylation. The chain is Putative pyruvate, phosphate dikinase regulatory protein from Alkaliphilus oremlandii (strain OhILAs) (Clostridium oremlandii (strain OhILAs)).